The primary structure comprises 383 residues: Protein delta homolog 2 (383 aa).

A signal peptide spans 1–26 (MPSGCRCLHLVCLLCILAAPVKPVRA). EGF-like domains follow at residues 27–58 (DDCSSHCDLAHGCCAPDGSCRCDPGWEGLHCE), 62–89 (RMPGCQHGTCHQPWQCICHSGWAGKFCD), 91–129 (DEHVCTTQSPCRNGGQCIYDGGGEYHCVCPPGFHGRDCE), and 131–172 (KEGP…AHCE). At 27–306 (DDCSSHCDLA…RQEAGLGKSS (280 aa)) the chain is on the extracellular side. 17 cysteine pairs are disulfide-bonded: Cys29–Cys40, Cys33–Cys46, Cys48–Cys57, Cys66–Cys71, Cys79–Cys88, Cys95–Cys107, Cys101–Cys117, Cys119–Cys128, Cys135–Cys148, Cys142–Cys160, Cys162–Cys171, Cys178–Cys189, Cys183–Cys198, Cys200–Cys209, Cys216–Cys227, Cys221–Cys236, and Cys238–Cys247. Residue Asn157 is glycosylated (N-linked (GlcNAc...) asparagine). Residues 174-210 (NVDDCLMRPCANGATCLDGINRFSCLCPEGFAGRFCT) form the EGF-like 5; calcium-binding domain. An EGF-like 6; calcium-binding domain is found at 212 to 248 (NLDDCASRPCQRGARCRDRVHDFDCLCPSGYGGKTCE). The helical transmembrane segment at 307–327 (LVAVVVFGAVTATLVLSTVLL) threads the bilayer. Topologically, residues 328-383 (TLRAWRRGVCPPGPCCYPAPHYAPARQDQECQVSMLPAGLPLPPDLPPEPGKTTAL) are cytoplasmic.

The protein resides in the membrane. Its function is as follows. Regulates adipogenesis. This chain is Protein delta homolog 2 (DLK2), found in Sus scrofa (Pig).